Here is an 87-residue protein sequence, read N- to C-terminus: Conotoxin Ca6.2 (87 aa).

An N-terminal signal peptide occupies residues 1-19 (MHTLEMLLLVLLLVPLAPG). A propeptide spanning residues 20–52 (EGDGQAVGGDRNPSEARRAYKRLLQRPARRMDR) is cleaved from the precursor. Disulfide bonds link cysteine 55–cysteine 64, cysteine 58–cysteine 70, and cysteine 63–cysteine 84.

It belongs to the conotoxin Q superfamily. Expressed by the venom duct.

Its subcellular location is the secreted. This is Conotoxin Ca6.2 from Conus caracteristicus (Characteristic cone).